Here is a 448-residue protein sequence, read N- to C-terminus: Probable glycine dehydrogenase (decarboxylating) subunit 1 (448 aa).

The protein belongs to the GcvP family. N-terminal subunit subfamily. The glycine cleavage system is composed of four proteins: P, T, L and H. In this organism, the P 'protein' is a heterodimer of two subunits.

The enzyme catalyses N(6)-[(R)-lipoyl]-L-lysyl-[glycine-cleavage complex H protein] + glycine + H(+) = N(6)-[(R)-S(8)-aminomethyldihydrolipoyl]-L-lysyl-[glycine-cleavage complex H protein] + CO2. Its function is as follows. The glycine cleavage system catalyzes the degradation of glycine. The P protein binds the alpha-amino group of glycine through its pyridoxal phosphate cofactor; CO(2) is released and the remaining methylamine moiety is then transferred to the lipoamide cofactor of the H protein. The chain is Probable glycine dehydrogenase (decarboxylating) subunit 1 from Bacillus pumilus (strain SAFR-032).